The following is a 302-amino-acid chain: Ornithine carbamoyltransferase (302 aa).

Residues 52–55 (STRT), Gln79, Arg103, and 130–133 (HPCQ) each bind carbamoyl phosphate. L-ornithine is bound by residues Asn161, Asp221, and 225–226 (SM). Carbamoyl phosphate-binding positions include 261–262 (CL) and Arg289.

This sequence belongs to the aspartate/ornithine carbamoyltransferase superfamily. OTCase family.

The protein localises to the cytoplasm. The enzyme catalyses carbamoyl phosphate + L-ornithine = L-citrulline + phosphate + H(+). It functions in the pathway amino-acid biosynthesis; L-arginine biosynthesis; L-arginine from L-ornithine and carbamoyl phosphate: step 1/3. In terms of biological role, reversibly catalyzes the transfer of the carbamoyl group from carbamoyl phosphate (CP) to the N(epsilon) atom of ornithine (ORN) to produce L-citrulline. The polypeptide is Ornithine carbamoyltransferase (Methanosarcina mazei (strain ATCC BAA-159 / DSM 3647 / Goe1 / Go1 / JCM 11833 / OCM 88) (Methanosarcina frisia)).